A 306-amino-acid chain; its full sequence is MRVRVAVPATTANLGPGFDCLGAALTLYNHFWFAPASTGELEITARGMDAEKISGDRDNLVYRAFAAFFEKQEQPVPALKLEIELAVPLARGLGSSATAIVAGLVGANALAGSPWSNAQLCDLATELEGHPDNVVPALLGGCRLAARDRQNQWAIADLDWHPDFIPVVAIPDFELSTEAARQVLPTQYSRSDAIFNAAHVGLVVRSLASGNGEWLAAALQDRLHQPYRQALIPGYAAVETAALEAGAFGLVISGAGPTLLAISSPDRAEAVRQAMLTTWQATGLSVRAEILAIAESGTQIEQETEN.

Residue 88–98 (PLARGLGSSAT) participates in ATP binding.

It belongs to the GHMP kinase family. Homoserine kinase subfamily.

Its subcellular location is the cytoplasm. The catalysed reaction is L-homoserine + ATP = O-phospho-L-homoserine + ADP + H(+). It participates in amino-acid biosynthesis; L-threonine biosynthesis; L-threonine from L-aspartate: step 4/5. Its function is as follows. Catalyzes the ATP-dependent phosphorylation of L-homoserine to L-homoserine phosphate. The protein is Homoserine kinase of Synechococcus sp. (strain ATCC 27144 / PCC 6301 / SAUG 1402/1) (Anacystis nidulans).